The chain runs to 366 residues: Flagellar P-ring protein (366 aa).

The N-terminal stretch at 1-20 (MVIKFLSALILLLVTTAAQA) is a signal peptide.

The protein belongs to the FlgI family. As to quaternary structure, the basal body constitutes a major portion of the flagellar organelle and consists of four rings (L,P,S, and M) mounted on a central rod.

The protein resides in the periplasm. The protein localises to the bacterial flagellum basal body. Functionally, assembles around the rod to form the L-ring and probably protects the motor/basal body from shearing forces during rotation. The protein is Flagellar P-ring protein of Escherichia coli (strain SE11).